Reading from the N-terminus, the 163-residue chain is Putative 4-hydroxy-4-methyl-2-oxoglutarate aldolase (163 aa).

Residues 76–79 and Arg98 contribute to the substrate site; that span reads GDML. Asp99 contacts a divalent metal cation.

It belongs to the class II aldolase/RraA-like family. As to quaternary structure, homotrimer. A divalent metal cation is required as a cofactor.

The enzyme catalyses 4-hydroxy-4-methyl-2-oxoglutarate = 2 pyruvate. The catalysed reaction is oxaloacetate + H(+) = pyruvate + CO2. Its function is as follows. Catalyzes the aldol cleavage of 4-hydroxy-4-methyl-2-oxoglutarate (HMG) into 2 molecules of pyruvate. Also contains a secondary oxaloacetate (OAA) decarboxylase activity due to the common pyruvate enolate transition state formed following C-C bond cleavage in the retro-aldol and decarboxylation reactions. This chain is Putative 4-hydroxy-4-methyl-2-oxoglutarate aldolase, found in Pseudomonas entomophila (strain L48).